The primary structure comprises 2904 residues: Highly reducing polyketide synthase bet1 (2904 aa).

In terms of domain architecture, Ketosynthase family 3 (KS3) spans 8 to 441; that stretch reads NEPIAIVGSG…GTNAHAIVES (434 aa). Residues Cys181, His320, and His361 each act as for beta-ketoacyl synthase activity in the active site. The interval 553–875 is acyl transferase (AT) domain; that stretch reads VFTGQGAQYA…PYHGTLLRGG (323 aa). The N-terminal hotdog fold stretch occupies residues 948 to 1081; that stretch reads HQLLGDVSPD…GELKVVLVDE (134 aa). Residues 948–1257 enclose the PKS/mFAS DH domain; sequence HQLLGDVSPD…FKPVGSDASN (310 aa). A dehydratase (DH) domain region spans residues 971–1255; the sequence is PREMTWLEGH…VKFKPVGSDA (285 aa). Residue His980 is the Proton acceptor; for dehydratase activity of the active site. The interval 1098 to 1257 is C-terminal hotdog fold; that stretch reads MIPVQPSRLY…FKPVGSDASN (160 aa). Asp1159 functions as the Proton donor; for dehydratase activity in the catalytic mechanism. The segment at 1411 to 1596 is methyltransferase (cMeT) domain; it reads KQSTLWVASI…GFSGIDTMSP (186 aa). Positions 2125 to 2298 are ketoreductase (KR)domain; sequence TYWLVGLSGA…RSSVVNVGAI (174 aa). The 80-residue stretch at 2407 to 2486 folds into the Carrier domain; it reads EVANVIKQAY…SLVELAAESI (80 aa). Residue Ser2445 is modified to O-(pantetheine 4'-phosphoryl)serine. The tract at residues 2492-2543 is disordered; that stretch reads PGVPQANANPNGPSSPDSDATESSNQNSDVDVTSTRATSPSTPAATSPDSNV. The segment covering 2497–2523 has biased composition (polar residues); it reads ANANPNGPSSPDSDATESSNQNSDVDV. The segment covering 2524-2541 has biased composition (low complexity); sequence TSTRATSPSTPAATSPDS. Residues 2585–2817 are reductase (R) domain; that stretch reads LTGCSGLLGH…DLVSVETCCE (233 aa).

The cofactor is pantetheine 4'-phosphate.

The catalysed reaction is 7 malonyl-CoA + acetyl-CoA + 10 AH2 + 5 S-adenosyl-L-methionine + 2 H(+) = dehydroprobetaenone I + 10 A + 5 S-adenosyl-L-homocysteine + 7 CO2 + 8 CoA + 6 H2O. The protein operates within mycotoxin biosynthesis. Functionally, highly reducing polyketide synthase; part of the gene cluster that mediates the biosynthesis of betaenones, phytotoxic polyketides involved in leaf spot disease in sugar beets. The first step of the pathway is the synthesis of dehydroprobetaenone I by the polyketide synthase bet1 and the enoyl reductase bet3 via condensation of one acetyl-CoA starter unit with 7 malonyl-CoA units and 5 methylations. The C-terminal reductase (R) domain of bet1 catalyzes the reductive release of the polyketide chain. Because bet1 lacks a designated enoylreductase (ER) domain, the required activity is provided the enoyl reductase bet3. The short-chain dehydrogenase/reductase bet4 then catalyzes reduction of dehydroprobetaenone I to probetaenone I. The cytochrome P450 monooxygenase bet2 catalyzes successive epoxidation, oxidation (resulting from epoxide opening) and hydroxylation to install a tertiary alcohol in the decaline ring to yield betaenone C from dehydroprobetaenone I and betaenone B from probetaenone I. The FAD-linked oxidoreductase (orf1) is probably responsible for the conversion of betaenone C to betaenone A via an intramolecular aldol reaction between C-1 and C-17 to form the bridged tricyclic system in betaenone A. The polypeptide is Highly reducing polyketide synthase bet1 (Neocamarosporium betae (Beet black rot fungus)).